Reading from the N-terminus, the 102-residue chain is Ribonuclease P protein component 1 (102 aa).

The protein belongs to the eukaryotic/archaeal RNase P protein component 1 family. As to quaternary structure, consists of a catalytic RNA component and at least 4-5 protein subunits.

Its subcellular location is the cytoplasm. The enzyme catalyses Endonucleolytic cleavage of RNA, removing 5'-extranucleotides from tRNA precursor.. Functionally, part of ribonuclease P, a protein complex that generates mature tRNA molecules by cleaving their 5'-ends. The protein is Ribonuclease P protein component 1 of Archaeoglobus fulgidus (strain ATCC 49558 / DSM 4304 / JCM 9628 / NBRC 100126 / VC-16).